We begin with the raw amino-acid sequence, 171 residues long: 3-hydroxydecanoyl-[acyl-carrier-protein] dehydratase (171 aa).

Residue histidine 70 is part of the active site.

Belongs to the thioester dehydratase family. FabA subfamily. Homodimer.

It is found in the cytoplasm. The catalysed reaction is a (3R)-hydroxyacyl-[ACP] = a (2E)-enoyl-[ACP] + H2O. It catalyses the reaction (3R)-hydroxydecanoyl-[ACP] = (2E)-decenoyl-[ACP] + H2O. The enzyme catalyses (2E)-decenoyl-[ACP] = (3Z)-decenoyl-[ACP]. It participates in lipid metabolism; fatty acid biosynthesis. In terms of biological role, necessary for the introduction of cis unsaturation into fatty acids. Catalyzes the dehydration of (3R)-3-hydroxydecanoyl-ACP to E-(2)-decenoyl-ACP and then its isomerization to Z-(3)-decenoyl-ACP. Can catalyze the dehydratase reaction for beta-hydroxyacyl-ACPs with saturated chain lengths up to 16:0, being most active on intermediate chain length. In Hydrogenovibrio crunogenus (strain DSM 25203 / XCL-2) (Thiomicrospira crunogena), this protein is 3-hydroxydecanoyl-[acyl-carrier-protein] dehydratase.